A 121-amino-acid polypeptide reads, in one-letter code: MIQQETYLTVADNSGAKRLQCIRVLGSNRRYAHVGDVIVATVKDALPNMGVKKSEVVKAVIVRTKATLRRNTGNSIRFDDNAAVLINEDKNPKGTRVFGPVARELRDKNYTKIVSLAPEVI.

It belongs to the universal ribosomal protein uL14 family. As to quaternary structure, part of the 50S ribosomal subunit. Forms a cluster with proteins L3 and L19. In the 70S ribosome, L14 and L19 interact and together make contacts with the 16S rRNA in bridges B5 and B8.

Its function is as follows. Binds to 23S rRNA. Forms part of two intersubunit bridges in the 70S ribosome. The chain is Large ribosomal subunit protein uL14 from Prochlorococcus marinus (strain MIT 9301).